We begin with the raw amino-acid sequence, 269 residues long: Putative hydro-lyase M446_2125 (269 aa).

Belongs to the D-glutamate cyclase family.

This is Putative hydro-lyase M446_2125 from Methylobacterium sp. (strain 4-46).